The following is a 2078-amino-acid chain: MPWPFSESIKKRACRYLLQRYLGHFLQEKLSLEQLSLDLYQGTGSLAQVPLDKWCLNEILESADAPLEVTEGFIQSISLSVPWGSLLQDNCALEVRGLEMVFRPRPRPATGSEPMYWSSFMTSSMQLAKECLSQKLTDEQGEGSQPFEGLEKFAETIETVLRRVKVTFIDTVLRIEHVPENSKTGTALEIRIERTVYCDETADESSGINVHQPTAFAHKLLQLSGVSLFWDEFSASAKSSPVCSTAPVETEPKLSPSWNPKIIYEPHPQLTRNLPEIAPSDPVQIGRLIGRLELSLTLKQNEVLPGAKLDVDGQIDSIHLLLSPRQVHLLLDMLAAIAGPENSSKIGLANKDRKNRPMQQEDEYRIQMELNRYYLRKDSLSVGVSSEQSFYETETARTPSSREEEVFFSMADMDMSHSLSSLPPLGDPPNMDLELSLTSTYTNTPAGSPLSATVLQPTWGEFLDHHKEQPVRGSTFPSNLVHPTPLQKTSLPSRSVSVDESRPELIFRLAVGTFSISVLHIDPLSPPETSQNLNPLTPMAVAFFTCIEKIDPARFSTEDFKSFRAVFAEACSHDHLRFIGTGIKVSYEQRQRSASRYFSTDMSIGQMEFLECLFPTDFHSVPPHYTELLTFHSKEETGSHSPVCLQLHYKHSENRGPQGNQARLSSVPHKAELQIKLNPVCCELDISIVDRLNSLLQPQKLATVEMMASHMYTSYNKHISLHKAFTEVFLDDSHSPANCRISVQVATPALNLSVRFPIPDLRSDQERGPWFKKSLQKEILYLAFTDLEFKTEFIGGSTPEQIKLELTFRELIGSFQEEKGDPSIKFFHVSSGVDGDTTSSDDFDWPRIVLKINPPAMHSILERIAAEEEEENDGHYQEEEEGGAHSLKDVCDLRRPAPSPFSSRRVMFENEQMVMPGDPVEMTEFQDKAISNSHYVLELTLPNIYVTLPNKSFYEKLYNRIFNDLLLWEPTAPSPVETFENISYGIGLSVASQLINTFNKDSFSAFKSAVHYDEESGSEEETLQYFSTVDPNYRSRRKKKLDSQNKNSQSFLSVLLNINHGLIAVFTDVKQDNGDLLENKHGEFWLEFNSGSLFCVTKYEGFDDKHYICLHSSSFSLYHKGIVNGVILPTETRLPSSTRPHWLEPTIYSSEEDGLSKTSSDGVGGDSLNMLSVAVKILSDKSESNTKEFLIAVGLKGATLQHRMLPSGLSWHEQILYFLNIADEPVLGYNPPTSFTTFHVHLWSCALDYRPLYLPIRSLLTVETFSVSSSVALDKSSSTLRIILDEAALHLSDKCNTVTINLSRDYVRVMDMGLLELTITAVKSDSDGEQTEPRFELHCSSDVVHIRTCSDSCAALMNLIQYIASYGDLQTPNKADMKPGAFQRRSKVDSSGRSSSRGPVLPEADQQMLRDLMSDAMEEIDMQQGTSSVKPQANGVLDEKSQIQEPCCSDLFLFPDESGNVSQESGPTYASFSHHFISDAMTGVPTENDDFCILFAPKAAMQEKEEEPVIKIMVDDAIVIRDNYFSLPVNKTDTSKAPLHFPIPVIRYVVKEVSLVWHLYGGKDFGIVPPTSPAKSYISPHSSPSHTPTRHGRNTVCGGKGRNHDFLMEIQLSKVKFQHEVYPPCKPDCDSSLSEHPVSRQVFIVQDLEIRDRLATSQMNKFLYLYCSKEMPRKAHSNMLTVKALHVCPESGRSPQECCLRVSLMPLRLNIDQDALFFLKDFFTSLSAEVELQMTPDPEVKKSPGADVTCSLPRHLSTSKEPNLVISFSGPKQPSQNDSANSVEVVNGMEEKNFSAEEASFRDQPVFFREFRFTSEVPIRLDYHGKHVSMDQGTLAGILIGLAQLNCSELKLKRLSYRHGLLGVDKLFSYAITEWLNDIKKNQLPGILGGVGPMHSLVQLVQGLKDLVWLPIEQYRKDGRIVRGFQRGAASFGTSTAMAALELTNRMVQTIQAAAETAYDMVSPGTLSIEPKKTKRFPHHRLAHQPVDLREGVAKAYSVVKEGITDTAQTIYETAAREHESRGVTGAVGEVLRQIPPAVVKPLIVATEATSNVLGGMRNQIRPDVRQDESQKWRHGDD.

The Chorein N-terminal domain maps to A13–P108. S255 and S379 each carry phosphoserine. Positions G473 to S495 are disordered. Positions L486–S495 are enriched in polar residues. Phosphoserine is present on residues S497, S840, S886, S899, and S1008. The segment at E868–K888 is disordered. The span at D873 to K888 shows a compositional bias: basic and acidic residues. Residue Y1012 is modified to Phosphotyrosine. S1016 and S1018 each carry phosphoserine. At T1022 the chain carries Phosphothreonine. The segment at A1375–D1405 is disordered. Residue S1526 is modified to Phosphoserine.

This sequence belongs to the ATG2 family. In terms of assembly, interacts with WDR45/WIPI4.

It is found in the preautophagosomal structure membrane. It localises to the lipid droplet. The protein resides in the endoplasmic reticulum membrane. It catalyses the reaction a 1,2-diacyl-sn-glycero-3-phospho-L-serine(in) = a 1,2-diacyl-sn-glycero-3-phospho-L-serine(out). The enzyme catalyses a 1,2-diacyl-sn-glycero-3-phosphoethanolamine(in) = a 1,2-diacyl-sn-glycero-3-phosphoethanolamine(out). In terms of biological role, lipid transfer protein required for both autophagosome formation and regulation of lipid droplet morphology and dispersion. Tethers the edge of the isolation membrane (IM) to the endoplasmic reticulum (ER) and mediates direct lipid transfer from ER to IM for IM expansion. Binds to the ER exit site (ERES), which is the membrane source for autophagosome formation, and extracts phospholipids from the membrane source and transfers them to ATG9 (ATG9A or ATG9B) to the IM for membrane expansion. Lipid transfer activity is enhanced by WDR45/WIPI4, which promotes ATG2B-association with phosphatidylinositol 3-monophosphate (PI3P)-containing membranes. The chain is Autophagy-related protein 2 homolog B from Homo sapiens (Human).